Reading from the N-terminus, the 878-residue chain is Pyruvate dehydrogenase phosphatase regulatory subunit, mitochondrial (878 aa).

A mitochondrion-targeting transit peptide spans 1-26 (MLPRLLAVVRGPGSCRGWREGSPARG).

Belongs to the GcvT family. Heterodimer of a catalytic (PDP1) and a regulatory (PDPR) subunit.

Its subcellular location is the mitochondrion matrix. Its function is as follows. Decreases the sensitivity of PDP1 to magnesium ions, and this inhibition is reversed by the polyamine spermine. The polypeptide is Pyruvate dehydrogenase phosphatase regulatory subunit, mitochondrial (PDPR) (Bos taurus (Bovine)).